Here is a 326-residue protein sequence, read N- to C-terminus: Malate dehydrogenase (326 aa).

NAD(+) is bound at residue 12 to 18 (GGTGQIA). Residues Arg-93 and Arg-99 each contribute to the substrate site. Residues Asn-106, Gln-113, and 130–132 (VGN) each bind NAD(+). Substrate contacts are provided by Asn-132 and Arg-163. His-188 functions as the Proton acceptor in the catalytic mechanism.

The protein belongs to the LDH/MDH superfamily. MDH type 2 family.

The catalysed reaction is (S)-malate + NAD(+) = oxaloacetate + NADH + H(+). Its function is as follows. Catalyzes the reversible oxidation of malate to oxaloacetate. In Chlamydia trachomatis serovar D (strain ATCC VR-885 / DSM 19411 / UW-3/Cx), this protein is Malate dehydrogenase.